A 113-amino-acid polypeptide reads, in one-letter code: Small ribosomal subunit protein uS17 (113 aa).

Belongs to the universal ribosomal protein uS17 family. As to quaternary structure, part of the 30S ribosomal subunit.

One of the primary rRNA binding proteins, it binds specifically to the 5'-end of 16S ribosomal RNA. The polypeptide is Small ribosomal subunit protein uS17 (Nanoarchaeum equitans (strain Kin4-M)).